Consider the following 323-residue polypeptide: Transaldolase (323 aa).

The Schiff-base intermediate with substrate role is filled by lysine 131.

The protein belongs to the transaldolase family. Type 1 subfamily. Homodimer.

Its subcellular location is the cytoplasm. It catalyses the reaction D-sedoheptulose 7-phosphate + D-glyceraldehyde 3-phosphate = D-erythrose 4-phosphate + beta-D-fructose 6-phosphate. Its pathway is carbohydrate degradation; pentose phosphate pathway; D-glyceraldehyde 3-phosphate and beta-D-fructose 6-phosphate from D-ribose 5-phosphate and D-xylulose 5-phosphate (non-oxidative stage): step 2/3. Functionally, transaldolase is important for the balance of metabolites in the pentose-phosphate pathway. The sequence is that of Transaldolase from Blochmanniella floridana.